Reading from the N-terminus, the 342-residue chain is N-alpha-acetyl-L-2,4-diaminobutyric acid deacetylase (342 aa).

The interval 103-124 (TAGRRTSPMDGGNLNRSFPGDP) is disordered.

It belongs to the DoeB deacetylase family. It depends on Zn(2+) as a cofactor.

It localises to the cytoplasm. The enzyme catalyses (2S)-2-acetamido-4-aminobutanoate + H2O = L-2,4-diaminobutanoate + acetate. Involved in the degradation of ectoine, which allows H.elongata to utilize ectoine as both a carbon and a nitrogen source for growth. Catalyzes the deacetylation of N-alpha-acetyl-L-2,4-diaminobutyrate (N-alpha-Ac-DABA) to yield L-2,4-diaminobutyrate (DABA). The polypeptide is N-alpha-acetyl-L-2,4-diaminobutyric acid deacetylase (Halomonas elongata (strain ATCC 33173 / DSM 2581 / NBRC 15536 / NCIMB 2198 / 1H9)).